A 219-amino-acid polypeptide reads, in one-letter code: uncharacterized protein (219 aa).

Basic and acidic residues-rich tracts occupy residues 1–20, 30–39, and 156–170; these read METPIEREIRRSCEREESLR, AGRELVELRV, and QEVRAVREREQELQR. The disordered stretch occupies residues 1-195; that stretch reads METPIEREIR…PSLTASRGDG (195 aa).

This sequence belongs to the MISP family.

This is an uncharacterized protein from Homo sapiens (Human).